Consider the following 207-residue polypeptide: LexA repressor (207 aa).

A DNA-binding region (H-T-H motif) is located at residues 28-48; sequence VREIGEAVGLASSSTVHGHLA. Catalysis depends on for autocatalytic cleavage activity residues serine 129 and lysine 167.

The protein belongs to the peptidase S24 family. As to quaternary structure, homodimer.

The enzyme catalyses Hydrolysis of Ala-|-Gly bond in repressor LexA.. Its function is as follows. Represses a number of genes involved in the response to DNA damage (SOS response), including recA and lexA. In the presence of single-stranded DNA, RecA interacts with LexA causing an autocatalytic cleavage which disrupts the DNA-binding part of LexA, leading to derepression of the SOS regulon and eventually DNA repair. The chain is LexA repressor from Geobacillus thermodenitrificans (strain NG80-2).